Here is a 330-residue protein sequence, read N- to C-terminus: Bifunctional pinoresinol-lariciresinol reductase 2 (330 aa).

NADP(+)-binding positions include 28–34 (GGTGYLG), Arg-53, and Lys-62. The active-site Proton acceptor is Lys-156. An NADP(+)-binding site is contributed by Arg-160. His-288 provides a ligand contact to substrate.

This sequence belongs to the NmrA-type oxidoreductase family. Isoflavone reductase subfamily. Dimer. As to expression, expressed in leaves, stems, leaves and seeds.

The enzyme catalyses (+)-lariciresinol + NADP(+) = (+)-pinoresinol + NADPH + H(+). It carries out the reaction (-)-secoisolariciresinol + NADP(+) = (+)-lariciresinol + NADPH + H(+). Reductase involved in lignan biosynthesis. Catalyzes the enantioselective conversion of (+)-pinoresinol into (+)-lariciresinol and of (+)-lariciresinol into (-)-secoisolariciresinol. Abstracts the 4R-hydride from the NADPH cofactor during catalysis. This is Bifunctional pinoresinol-lariciresinol reductase 2 (PLR_Lu2) from Linum usitatissimum (Flax).